The sequence spans 430 residues: Histidine--tRNA ligase (430 aa).

Belongs to the class-II aminoacyl-tRNA synthetase family. In terms of assembly, homodimer.

Its subcellular location is the cytoplasm. It carries out the reaction tRNA(His) + L-histidine + ATP = L-histidyl-tRNA(His) + AMP + diphosphate + H(+). The chain is Histidine--tRNA ligase from Lactococcus lactis subsp. cremoris (strain SK11).